A 395-amino-acid polypeptide reads, in one-letter code: Phosphoglycerate kinase (395 aa).

Substrate-binding positions include 20–22 (DFN), arginine 36, 59–62 (HLGR), arginine 120, and arginine 157. ATP-binding positions include lysine 208, glycine 296, glutamate 327, and 353–356 (GGDT).

It belongs to the phosphoglycerate kinase family. Monomer.

Its subcellular location is the cytoplasm. The catalysed reaction is (2R)-3-phosphoglycerate + ATP = (2R)-3-phospho-glyceroyl phosphate + ADP. It functions in the pathway carbohydrate degradation; glycolysis; pyruvate from D-glyceraldehyde 3-phosphate: step 2/5. This Tropheryma whipplei (strain Twist) (Whipple's bacillus) protein is Phosphoglycerate kinase.